Consider the following 173-residue polypeptide: Peptide deformylase (173 aa).

The Fe cation site is built by Cys94 and His136. Glu137 is a catalytic residue. His140 serves as a coordination point for Fe cation.

The protein belongs to the polypeptide deformylase family. Fe(2+) serves as cofactor.

The enzyme catalyses N-terminal N-formyl-L-methionyl-[peptide] + H2O = N-terminal L-methionyl-[peptide] + formate. Removes the formyl group from the N-terminal Met of newly synthesized proteins. Requires at least a dipeptide for an efficient rate of reaction. N-terminal L-methionine is a prerequisite for activity but the enzyme has broad specificity at other positions. This chain is Peptide deformylase, found in Desulfosudis oleivorans (strain DSM 6200 / JCM 39069 / Hxd3) (Desulfococcus oleovorans).